The chain runs to 225 residues: Transmembrane protein 225 (225 aa).

Over 1-8 (MVHVSNRS) the chain is Cytoplasmic. Residues 9–29 (IQGMNILFSSWAVVLMVMGIT) traverse the membrane as a helical segment. At 30-72 (LDKWVELISEDERAKMNHSPWMMCCPALWPEDDLKVVRIMMTS) the chain is on the extracellular side. Residues 73–93 (SLGLSFLLNLILGMKFTYLIP) traverse the membrane as a helical segment. Topologically, residues 94-99 (QNKYIQ) are cytoplasmic. The chain crosses the membrane as a helical span at residues 100-120 (LFTTILSFFSGISLLWALILY). Over 121–136 (HNKLKQGQSMHFSSYR) the chain is Extracellular. A helical membrane pass occupies residues 137–157 (ITWIMYTAYLNVFFLSVCGVL). The Cytoplasmic portion of the chain corresponds to 158 to 225 (SLLECKLSTS…VQTRHVTWAL (68 aa)). The RVxF signature appears at 219 to 223 (RHVTW).

As to quaternary structure, interacts (via RVxF motif) with PPP1CC.

Its subcellular location is the cytoplasmic vesicle. It localises to the secretory vesicle. The protein localises to the acrosome membrane. Its function is as follows. Probably inhibits protein phosphatase 1 (PP1) in sperm via binding to catalytic subunit PPP1CC. This chain is Transmembrane protein 225 (TMEM225), found in Homo sapiens (Human).